The chain runs to 487 residues: Polyamine oxidase 4 (487 aa).

FAD-binding residues include Glu-53, Arg-61, Val-242, and Glu-429. Positions 485–487 (CRT) match the Microbody targeting signal motif.

The protein belongs to the flavin monoamine oxidase family. It depends on FAD as a cofactor. Widely expressed.

It is found in the peroxisome. It catalyses the reaction spermine + O2 + H2O = 3-aminopropanal + spermidine + H2O2. It carries out the reaction norspermine + O2 + H2O = norspermidine + 3-aminopropanal + H2O2. The catalysed reaction is thermospermine + O2 + H2O = 3-aminopropanal + spermidine + H2O2. It functions in the pathway amine and polyamine degradation; spermine degradation. Functionally, flavoenzyme involved in polyamine back-conversion. Catalyzes the oxidation of the secondary amino group of polyamines, such as spermine. Substrate preference is spermine &gt; thermospermine &gt; norspermine. No activity detected when putrescine, spermidine or N(1)-acetylspermidine are used as substrates. Plays an important role in the regulation of polyamine intracellular concentration. In Oryza sativa subsp. japonica (Rice), this protein is Polyamine oxidase 4.